A 307-amino-acid chain; its full sequence is Cytochrome c1 2, heme protein, mitochondrial (307 aa).

The transit peptide at 1 to 64 (MVGGGVIRQL…LLSFSTVASA (64 aa)) directs the protein to the mitochondrion. At 65–270 (DEAEHGLECP…EPEMEERKLM (206 aa)) the chain is on the mitochondrial intermembrane side. A Cytochrome c domain is found at 90–197 (ASIRRGHQVY…NGQNYVFALL (108 aa)). Positions 103, 106, 107, and 226 each coordinate heme c. The chain crosses the membrane as a helical span at residues 271 to 288 (GFKWIFLLSLALLQAAYY). Residues 289 to 307 (RRLKWSVLKSRKLVLDVVN) lie on the Mitochondrial matrix side of the membrane.

It belongs to the cytochrome c family. In terms of assembly, component of the ubiquinol-cytochrome c oxidoreductase (cytochrome b-c1 complex, complex III, CIII), a multisubunit enzyme composed of 10 subunits. The complex is composed of 3 respiratory subunits cytochrome b (MT-CYB), cytochrome c1 (CYC1-1 or CYC1-2) and Rieske protein (UCR1-1 or UCR1-2), 2 core protein subunits MPPalpha1 (or MPPalpha2) and MPPB, and 5 low-molecular weight protein subunits QCR7-1 (or QCR7-2), UCRQ-1 (or UCRQ-2), QCR9, UCRY and probably QCR6-1 (or QCR6-2). The complex exists as an obligatory dimer and forms supercomplexes (SCs) in the inner mitochondrial membrane with NADH-ubiquinone oxidoreductase (complex I, CI), resulting in different assemblies (supercomplexes SCI(1)III(2) and SCI(2)III(4)). In terms of processing, binds 1 heme c group covalently per subunit.

The protein resides in the mitochondrion inner membrane. Component of the ubiquinol-cytochrome c oxidoreductase, a multisubunit transmembrane complex that is part of the mitochondrial electron transport chain which drives oxidative phosphorylation. The respiratory chain contains 3 multisubunit complexes succinate dehydrogenase (complex II, CII), ubiquinol-cytochrome c oxidoreductase (cytochrome b-c1 complex, complex III, CIII) and cytochrome c oxidase (complex IV, CIV), that cooperate to transfer electrons derived from NADH and succinate to molecular oxygen, creating an electrochemical gradient over the inner membrane that drives transmembrane transport and the ATP synthase. The cytochrome b-c1 complex catalyzes electron transfer from ubiquinol to cytochrome c, linking this redox reaction to translocation of protons across the mitochondrial inner membrane, with protons being carried across the membrane as hydrogens on the quinol. In the process called Q cycle, 2 protons are consumed from the matrix, 4 protons are released into the intermembrane space and 2 electrons are passed to cytochrome c. Cytochrome c1 is a catalytic core subunit containing a c-type heme. It transfers electrons from the [2Fe-2S] iron-sulfur cluster of the Rieske protein to cytochrome c. This Arabidopsis thaliana (Mouse-ear cress) protein is Cytochrome c1 2, heme protein, mitochondrial (CYC1-2).